Consider the following 233-residue polypeptide: uncharacterized protein (233 aa).

Residues 21-43 are disordered; sequence RWRTATSADHPRRGRPAAQAVRR.

This is an uncharacterized protein from Mycobacterium tuberculosis (strain CDC 1551 / Oshkosh).